A 238-amino-acid chain; its full sequence is tRNA (guanine-N(7)-)-methyltransferase (238 aa).

4 residues coordinate S-adenosyl-L-methionine: E68, E93, D120, and D143. D143 is an active-site residue. Substrate contacts are provided by residues K147, D179, and 216-219 (TKFE).

The protein belongs to the class I-like SAM-binding methyltransferase superfamily. TrmB family.

The enzyme catalyses guanosine(46) in tRNA + S-adenosyl-L-methionine = N(7)-methylguanosine(46) in tRNA + S-adenosyl-L-homocysteine. The protein operates within tRNA modification; N(7)-methylguanine-tRNA biosynthesis. In terms of biological role, catalyzes the formation of N(7)-methylguanine at position 46 (m7G46) in tRNA. In Aliivibrio fischeri (strain MJ11) (Vibrio fischeri), this protein is tRNA (guanine-N(7)-)-methyltransferase.